We begin with the raw amino-acid sequence, 297 residues long: uncharacterized protein (297 aa).

A helical membrane pass occupies residues 191-211 (VMIILSCSNITILAVLSIVGL). A compositionally biased stretch (polar residues) spans 275–287 (SKTSETQSVSGST). The segment at 275-297 (SKTSETQSVSGSTHSDEKLTAPM) is disordered. A compositionally biased stretch (basic and acidic residues) spans 288 to 297 (HSDEKLTAPM).

The protein localises to the host membrane. This is an uncharacterized protein from Cryphonectria parasitica mycoreovirus 1 (strain 9B21) (CpMYRV-1).